The chain runs to 72 residues: MAKDDVIEVEGTVIETLPNAMFRVELENGHTVLAHVSGKIRMHFIRILPGDRVTVELSPYDLTRGRITYRYK.

Residues 1–72 (MAKDDVIEVE…TRGRITYRYK (72 aa)) enclose the S1-like domain. Phosphotyrosine is present on Tyr-60.

This sequence belongs to the IF-1 family. Component of the 30S ribosomal translation pre-initiation complex which assembles on the 30S ribosome in the order IF-2 and IF-3, IF-1 and N-formylmethionyl-tRNA(fMet); mRNA recruitment can occur at any time during PIC assembly.

Its subcellular location is the cytoplasm. Functionally, one of the essential components for the initiation of protein synthesis. Stabilizes the binding of IF-2 and IF-3 on the 30S subunit to which N-formylmethionyl-tRNA(fMet) subsequently binds. Helps modulate mRNA selection, yielding the 30S pre-initiation complex (PIC). Upon addition of the 50S ribosomal subunit IF-1, IF-2 and IF-3 are released leaving the mature 70S translation initiation complex. This is Translation initiation factor IF-1 from Geobacillus kaustophilus (strain HTA426).